The chain runs to 639 residues: ATP-dependent rRNA helicase spb4 (639 aa).

Positions 14–42 (WDAVTPPLSEWVLEAMSSMGFARMTPVQA) match the Q motif motif. The 205-residue stretch at 45-249 (IPLFMAHKDV…RVGLRNPVKI (205 aa)) folds into the Helicase ATP-binding domain. 58-65 (AVTGSGKT) serves as a coordination point for ATP. Positions 197 to 200 (DEAD) match the DEAD box motif. In terms of domain architecture, Helicase C-terminal spans 283–437 (ALKNILSSVQ…SISFSDADAT (155 aa)). Disordered stretches follow at residues 531–601 (RKEL…ETKE) and 620–639 (AAKA…KGFD). Residues 561–624 (QNAENKNKKL…RFRQAAAKAE (64 aa)) adopt a coiled-coil conformation. Residues 577–601 (KLKQEKTKWENMTEEERQKARETKE) are compositionally biased toward basic and acidic residues.

This sequence belongs to the DEAD box helicase family. DDX55/SPB4 subfamily. Component of pre-60S ribosomal complexes.

Its subcellular location is the nucleus. The protein resides in the nucleolus. The catalysed reaction is ATP + H2O = ADP + phosphate + H(+). Functionally, ATP-binding RNA helicase involved in the biogenesis of 60S ribosomal subunits. Binds 90S pre-ribosomal particles and dissociates from pre-60S ribosomal particles after processing of 27SB pre-rRNA. Required for the normal formation of 18S rRNA through the processing of pre-rRNAs at sites A0, A1 and A2, and the normal formation of 25S and 5.8S rRNAs through the processing of pre-rRNAs at sites C1 and C2. This chain is ATP-dependent rRNA helicase spb4, found in Aspergillus clavatus (strain ATCC 1007 / CBS 513.65 / DSM 816 / NCTC 3887 / NRRL 1 / QM 1276 / 107).